The chain runs to 280 residues: Protein synthesis inhibitor II (280 aa).

Residue alanine 1 is modified to N-acetylalanine. Glutamate 174 is an active-site residue.

The protein belongs to the ribosome-inactivating protein family. Type 1 RIP subfamily.

It localises to the cytoplasm. The catalysed reaction is Endohydrolysis of the N-glycosidic bond at one specific adenosine on the 28S rRNA.. Its function is as follows. Inhibits the elongation phase of protein synthesis. It inactivates fungal ribosomes even more effectively than mammalian ribosomes and is thought to function as a constitutive antifungal agent in plants. This chain is Protein synthesis inhibitor II (RIP30A), found in Hordeum vulgare (Barley).